The following is a 314-amino-acid chain: Regulator of microtubule dynamics protein 1 (314 aa).

N6-succinyllysine is present on K165. TPR repeat units follow at residues 168 to 204 (AICL…NPKD) and 222 to 258 (PWYQ…DPNF).

The protein belongs to the RMDN family. Interacts with microtubules.

It localises to the cytoplasm. The protein localises to the cytoskeleton. The protein resides in the spindle. Its subcellular location is the spindle pole. The protein is Regulator of microtubule dynamics protein 1 (RMDN1) of Homo sapiens (Human).